The sequence spans 84 residues: Small ribosomal subunit protein uS17 (84 aa).

It belongs to the universal ribosomal protein uS17 family. In terms of assembly, part of the 30S ribosomal subunit.

Functionally, one of the primary rRNA binding proteins, it binds specifically to the 5'-end of 16S ribosomal RNA. The protein is Small ribosomal subunit protein uS17 of Vibrio parahaemolyticus serotype O3:K6 (strain RIMD 2210633).